Consider the following 330-residue polypeptide: Beta-ketoacyl-[acyl-carrier-protein] synthase III (330 aa).

Residues C116 and H257 contribute to the active site. Positions 258–262 (QANQR) are ACP-binding. The active site involves N287.

This sequence belongs to the thiolase-like superfamily. FabH family. Homodimer.

It is found in the cytoplasm. It carries out the reaction malonyl-[ACP] + acetyl-CoA + H(+) = 3-oxobutanoyl-[ACP] + CO2 + CoA. It functions in the pathway lipid metabolism; fatty acid biosynthesis. Functionally, catalyzes the condensation reaction of fatty acid synthesis by the addition to an acyl acceptor of two carbons from malonyl-ACP. Catalyzes the first condensation reaction which initiates fatty acid synthesis and may therefore play a role in governing the total rate of fatty acid production. Possesses both acetoacetyl-ACP synthase and acetyl transacylase activities. Its substrate specificity determines the biosynthesis of branched-chain and/or straight-chain of fatty acids. In Synechocystis sp. (strain ATCC 27184 / PCC 6803 / Kazusa), this protein is Beta-ketoacyl-[acyl-carrier-protein] synthase III.